A 98-amino-acid polypeptide reads, in one-letter code: HssA/B-like protein 34 (98 aa).

Disordered stretches follow at residues 1 to 26 (MTLF…SFGS) and 60 to 98 (AKSS…SCSC). Positions 60–72 (AKSSGGSCGGKGG) are enriched in gly residues. The span at 73-88 (SHNHGHGHGHGPHGHG) shows a compositional bias: basic residues. Positions 89–98 (GKGSGGSCSC) are enriched in gly residues.

Belongs to the hssA/B family.

The protein is HssA/B-like protein 34 (hssl34) of Dictyostelium discoideum (Social amoeba).